Here is a 1285-residue protein sequence, read N- to C-terminus: Ataxin-2 (1285 aa).

Disordered regions lie at residues 1 to 85 (MRSS…PGSR), 111 to 178 (ARAC…SPGA), and 197 to 224 (PVASSSAAAGGGRPGLGRGRNSSKGLPQ). Residues 29–38 (SLPRTARRGG) are compositionally biased toward basic residues. The span at 48 to 65 (AGPPPRGPGAPPRGPRSP) shows a compositional bias: pro residues. Residues 128–144 (SSSARPAPGCPRPACEP) are compositionally biased toward low complexity. Positions 205–214 (AGGGRPGLGR) are enriched in gly residues. Serine 218 and serine 219 each carry phosphoserine. Residues 237–314 (RMVHILTSVV…FVVVQFKDTD (78 aa)) form the Sm domain. Phosphoserine is present on residues serine 362 and serine 435. Composition is skewed to basic and acidic residues over residues 428 to 440 (ALENDDRSEEEKY) and 447 to 461 (CSDREGHGPNTRDNK). 2 disordered regions span residues 428–925 (ALEN…HQQP) and 1111–1191 (AALH…QSSF). Position 477 is a phosphoserine (serine 477). The span at 498-510 (ASHTSDFNPNAGS) shows a compositional bias: polar residues. Serine 523 bears the Phosphoserine mark. The span at 526-552 (PSHSSRPPSRYQSGPNSLPPRAATHTR) shows a compositional bias: low complexity. Residues 554–567 (PSRPPSRPSRPPSH) are compositionally biased toward pro residues. Residue serine 593 is modified to Phosphoserine. A compositionally biased stretch (basic residues) spans 596–606 (AQRHPRNHRVS). Arginine 609 is subject to Asymmetric dimethylarginine; alternate. The residue at position 609 (arginine 609) is an Omega-N-methylarginine; alternate. 2 positions are modified to phosphoserine: serine 611 and serine 653. Over residues 662 to 672 (PRQSSIGNSPS) the composition is skewed to polar residues. Over residues 685 to 694 (PAEAVSMPVP) the composition is skewed to low complexity. Serine 697 is subject to Phosphoserine. Threonine 710 carries the post-translational modification Phosphothreonine. Over residues 737-746 (ASETSPSFSK) the composition is skewed to polar residues. 2 positions are modified to phosphoserine: serine 741 and serine 753. Over residues 757–773 (SEHRKQIDDLKKFKNDF) the composition is skewed to basic and acidic residues. Polar residues predominate over residues 776–789 (QPSSTSESMDQLLS). The segment covering 790 to 813 (KNREGEKSRDLIKDKTEASAKDSF) has biased composition (basic and acidic residues). The span at 814-838 (IDSSSSSSNCTSGSSKTNSPSISPS) shows a compositional bias: low complexity. 7 positions are modified to phosphoserine: serine 827, serine 828, serine 832, serine 836, serine 838, serine 859, and serine 860. Residues 851–862 (VTSQGVQTSSPA) show a composition bias toward polar residues. Lysine 864 participates in a covalent cross-link: Glycyl lysine isopeptide (Lys-Gly) (interchain with G-Cter in SUMO2). Over residues 864 to 881 (KQEKDDREEKKDTTEQVR) the composition is skewed to basic and acidic residues. Low complexity-rich tracts occupy residues 896 to 907 (SFSQPKPSTTPT) and 1128 to 1165 (GQQQSQHGGSHPAPSPVQHHQHQAAQALHLASPQQQSA).

It belongs to the ataxin-2 family. Interacts with RBFOX1. Monomer. Can also form homodimers. Interacts with polyribosomes. Interacts with EGFR. Interacts with SH3GL3. Interacts with SH3GL2, SH3KBP1 and CBL. Interacts with ATXN2L. As to expression, expressed in the heart, lung, liver, kidney, skeletal muscle, spleen and intestine. Predominant expression was seen in the brain where a high level expression was found in the pyramidal cortical neurons, large brain stem neurons and cerebellar Purkinje cells. All three isoforms were found in all the tissues except skeletal muscle where only isoform 1 was found.

Its subcellular location is the cytoplasm. Involved in EGFR trafficking, acting as negative regulator of endocytic EGFR internalization at the plasma membrane. This is Ataxin-2 (Atxn2) from Mus musculus (Mouse).